The sequence spans 705 residues: 1,4-alpha-glucan branching enzyme GlgB (705 aa).

Residue D393 is the Nucleophile of the active site. E446 acts as the Proton donor in catalysis.

The protein belongs to the glycosyl hydrolase 13 family. GlgB subfamily. Monomer.

It catalyses the reaction Transfers a segment of a (1-&gt;4)-alpha-D-glucan chain to a primary hydroxy group in a similar glucan chain.. Its pathway is glycan biosynthesis; glycogen biosynthesis. Catalyzes the formation of the alpha-1,6-glucosidic linkages in glycogen by scission of a 1,4-alpha-linked oligosaccharide from growing alpha-1,4-glucan chains and the subsequent attachment of the oligosaccharide to the alpha-1,6 position. This is 1,4-alpha-glucan branching enzyme GlgB from Picrophilus torridus (strain ATCC 700027 / DSM 9790 / JCM 10055 / NBRC 100828 / KAW 2/3).